We begin with the raw amino-acid sequence, 862 residues long: Interleukin-12 receptor subunit beta-2 (862 aa).

An N-terminal signal peptide occupies residues 1-23 (MAHTFRGCSLAFMFIITWLLIKA). Over 24–622 (KIDACKRGDV…REFCLQGKAN (599 aa)) the chain is Extracellular. 5 N-linked (GlcNAc...) asparagine glycosylation sites follow: Asn48, Asn129, Asn166, Asn195, and Asn271. 5 consecutive Fibronectin type-III domains span residues 126 to 221 (QPQN…FLDI), 226 to 319 (PPWD…TPEE), 320 to 419 (EPTG…LCEA), 423 to 520 (APRQ…KHKA), and 521 to 620 (PLSG…LQGK). A WSXWS motif motif is present at residues 305-309 (WSDWS). 3 N-linked (GlcNAc...) asparagine glycosylation sites follow: Asn347, Asn376, and Asn480. Residues 623-643 (WMAFVAPSICIAIIMVGIFST) form a helical membrane-spanning segment. Residues 644-862 (HYFQQKVFVL…LKMRCDSLML (219 aa)) are Cytoplasmic-facing. The Box 1 motif signature appears at 662–670 (CSREIPDPA). The interval 725 to 755 (NWPQREKGIQGHQASEKDMMHSASSPPPPRA) is disordered. A compositionally biased stretch (basic and acidic residues) spans 728-744 (QREKGIQGHQASEKDMM). The tract at residues 796–801 (THDGYL) is required for STAT4 binding. Tyr800 is modified (phosphotyrosine).

Belongs to the type I cytokine receptor family. Type 2 subfamily. As to quaternary structure, heterodimer/heterooligomer; disulfide-linked. The functional high affinity IL12 receptor is composed of I12RB1 and IL12RB2. Il12RB2 binds JAK2 (via its N-terminal) through a membrane-proximal region of the cytoplasmic domain. Interaction, in vitro and in vivo, with SOCS3 (via its SH2 domain) inhibits the STAT4-mediated activation. Binds STAT4 through a membrane-distal C-terminal region. In terms of processing, on IL12 binding, phosphorylated on C-terminal tyrosine residues by JAK2. Phosphorylation on Tyr-800 is required for STAT4 binding and activation, and for SOCS3 binding. As to expression, isoform 2 is expressed at similar levels in both naive and activated T-cells.

It is found in the membrane. Functionally, receptor for interleukin-12. This subunit is the signaling component coupling to the JAK2/STAT4 pathway. Promotes the proliferation of T-cells as well as NK cells. Induces the promotion of T-cells towards the Th1 phenotype by strongly enhancing IFN-gamma production. This chain is Interleukin-12 receptor subunit beta-2 (IL12RB2), found in Homo sapiens (Human).